The primary structure comprises 225 residues: UPF0758 protein BP1235 (225 aa).

One can recognise an MPN domain in the interval 103–225; sequence ALANPDLVRR…TVSMAAQGHL (123 aa). H174, H176, and D187 together coordinate Zn(2+). The short motif at 174–187 is the JAMM motif element; that stretch reads HNHPGGTAAASAAD.

The protein belongs to the UPF0758 family.

The chain is UPF0758 protein BP1235 from Bordetella pertussis (strain Tohama I / ATCC BAA-589 / NCTC 13251).